We begin with the raw amino-acid sequence, 512 residues long: Cobyric acid synthase (512 aa).

The region spanning 251-451 (ALDITVIRLP…IHGLFDSANF (201 aa)) is the GATase cobBQ-type domain. Residue cysteine 332 is the Nucleophile of the active site. Residue histidine 443 is part of the active site.

It belongs to the CobB/CobQ family. CobQ subfamily.

It participates in cofactor biosynthesis; adenosylcobalamin biosynthesis. Its function is as follows. Catalyzes amidations at positions B, D, E, and G on adenosylcobyrinic A,C-diamide. NH(2) groups are provided by glutamine, and one molecule of ATP is hydrogenolyzed for each amidation. This Photorhabdus laumondii subsp. laumondii (strain DSM 15139 / CIP 105565 / TT01) (Photorhabdus luminescens subsp. laumondii) protein is Cobyric acid synthase.